A 142-amino-acid polypeptide reads, in one-letter code: Large ribosomal subunit protein uL11 (142 aa).

This sequence belongs to the universal ribosomal protein uL11 family. In terms of assembly, part of the ribosomal stalk of the 50S ribosomal subunit. Interacts with L10 and the large rRNA to form the base of the stalk. L10 forms an elongated spine to which L12 dimers bind in a sequential fashion forming a multimeric L10(L12)X complex. One or more lysine residues are methylated.

Functionally, forms part of the ribosomal stalk which helps the ribosome interact with GTP-bound translation factors. This is Large ribosomal subunit protein uL11 from Vesicomyosocius okutanii subsp. Calyptogena okutanii (strain HA).